Reading from the N-terminus, the 131-residue chain is Cytochrome c-552 (131 aa).

Heme c contacts are provided by Cys11, Cys14, His15, and Met69.

Binds 1 heme c group covalently per subunit.

Functionally, this monoheme basic protein appears to function as an electron donor to cytochrome oxidase in T.thermophilus. The protein is Cytochrome c-552 (cycA) of Thermus thermophilus.